We begin with the raw amino-acid sequence, 748 residues long: Peroxisomal membrane protein PEX14 (748 aa).

2 disordered regions span residues 1–138 (MDND…LSPS) and 190–228 (GNIN…NNNN). The Peroxisomal segment spans residues 1-277 (MDNDDINNNN…IAQLMMNNNR (277 aa)). Positions 7–30 (NNNNNNNNNNNNNNNSQELDQQEQ) are enriched in low complexity. Residues 8-60 (NNNNNNNNNNNNNNSQELDQQEQTQEEITKQRIQKRKEEAKRIMEERKKREQQ) are a coiled coil. The span at 43–59 (RKEEAKRIMEERKKREQ) shows a compositional bias: basic and acidic residues. Residues 86–104 (PQRQQQYDDNDEPPQQQQY) are compositionally biased toward polar residues. Low complexity-rich tracts occupy residues 122-131 (TTSSTASAAT), 190-209 (GNIN…NSIS), and 218-228 (NNNNNSSNNNN). The stretch at 241–277 (QQHQQQQQMALTQIQSYQKRLEADDQRIAQLMMNNNR) forms a coiled coil. The chain crosses the membrane as a helical span at residues 278–300 (FSWNSFLFSVTAIVGAASGLAYL). The Cytoplasmic segment spans residues 301-748 (TSNYIIPFLN…INNTDSSVEK (448 aa)). Positions 316 to 413 (KDASANMDKK…IGNKENSNNS (98 aa)) form a coiled coil. 2 disordered regions span residues 406–673 (NKEN…ETPY) and 685–748 (KQGK…SVEK). Composition is skewed to low complexity over residues 409–424 (NSNN…NNNN) and 445–476 (STNN…PGSN). Residues 510–527 (SWQQKSSNPPSDLSNAND) show a composition bias toward polar residues. Composition is skewed to low complexity over residues 528 to 542 (KSSP…PTKP) and 569 to 611 (TTTT…NNNN). Residues 612–627 (TTIASTSNESNNSKVE) show a composition bias toward polar residues. The segment covering 628 to 661 (TTSNDSDKSTSPSSSSNNTTSTTATTTTITSAST) has biased composition (low complexity). The segment covering 710-723 (SAKERPKKPWERDT) has biased composition (basic and acidic residues). Polar residues predominate over residues 724–748 (LTSVTNNLSVEETQTINNTDSSVEK).

Belongs to the peroxin-14 family. In terms of assembly, interacts with PEX13; forming the PEX13-PEX14 docking complex. Interacts with PEX5 (via WxxxF/Y motifs).

Its subcellular location is the peroxisome membrane. Functionally, component of the PEX13-PEX14 docking complex, a translocon channel that specifically mediates the import of peroxisomal cargo proteins bound to PEX5 receptor. The PEX13-PEX14 docking complex forms a large import pore which can be opened to a diameter of about 9 nm. Mechanistically, PEX5 receptor along with cargo proteins associates with the PEX14 subunit of the PEX13-PEX14 docking complex in the cytosol, leading to the insertion of the receptor into the organelle membrane with the concomitant translocation of the cargo into the peroxisome matrix. The sequence is that of Peroxisomal membrane protein PEX14 (pex14) from Dictyostelium discoideum (Social amoeba).